The sequence spans 429 residues: Adenylosuccinate synthetase (429 aa).

GTP is bound by residues G12–K18 and G40–T42. D13 (proton acceptor) is an active-site residue. The Mg(2+) site is built by D13 and G40. IMP-binding positions include D13–K16, N38–H41, T128, R142, Q223, T238, and R302. The Proton donor role is filled by H41. A substrate-binding site is contributed by V298–R304. Residues R304, K330–D332, and G412–G414 contribute to the GTP site.

It belongs to the adenylosuccinate synthetase family. Homodimer. Mg(2+) is required as a cofactor.

It localises to the cytoplasm. The enzyme catalyses IMP + L-aspartate + GTP = N(6)-(1,2-dicarboxyethyl)-AMP + GDP + phosphate + 2 H(+). It functions in the pathway purine metabolism; AMP biosynthesis via de novo pathway; AMP from IMP: step 1/2. Functionally, plays an important role in the de novo pathway of purine nucleotide biosynthesis. Catalyzes the first committed step in the biosynthesis of AMP from IMP. The polypeptide is Adenylosuccinate synthetase (Pseudarthrobacter chlorophenolicus (strain ATCC 700700 / DSM 12829 / CIP 107037 / JCM 12360 / KCTC 9906 / NCIMB 13794 / A6) (Arthrobacter chlorophenolicus)).